Here is a 134-residue protein sequence, read N- to C-terminus: Histone H2A (134 aa).

A compositionally biased stretch (gly residues) spans Met1–Ala10. Residues Met1–Gly24 are disordered. An N6-acetyllysine mark is found at Lys5 and Lys9. Gln106 bears the N5-methylglutamine mark. The tract at residues Gln115–Leu134 is disordered. Residue Ser131 is modified to Phosphoserine. The [ST]-Q motif motif lies at Ser131–Gln132.

It belongs to the histone H2A family. The nucleosome is a histone octamer containing two molecules each of H2A, H2B, H3 and H4 assembled in one H3-H4 heterotetramer and two H2A-H2B heterodimers. The octamer wraps approximately 147 bp of DNA. Phosphorylated to form H2AS128ph (gamma-H2A) in response to DNA double-strand breaks (DSBs) generated by exogenous genotoxic agents and by stalled replication forks. Phosphorylation is dependent on the DNA damage checkpoint kinases mec1/ATR and tel1/ATM, spreads on either side of a detected DSB site and may mark the surrounding chromatin for recruitment of proteins required for DNA damage signaling and repair. Gamma-H2A is removed from the DNA prior to the strand invasion-primer extension step of the repair process and subsequently dephosphorylated. Dephosphorylation is necessary for efficient recovery from the DNA damage checkpoint. In terms of processing, acetylated by esa1 to form H2AK4ac and H2AK7ac.

It localises to the nucleus. It is found in the chromosome. In terms of biological role, core component of nucleosome which plays a central role in DNA double strand break (DSB) repair. Nucleosomes wrap and compact DNA into chromatin, limiting DNA accessibility to the cellular machineries which require DNA as a template. Histones thereby play a central role in transcription regulation, DNA repair, DNA replication and chromosomal stability. DNA accessibility is regulated via a complex set of post-translational modifications of histones, also called histone code, and nucleosome remodeling. This chain is Histone H2A (httA), found in Aspergillus niger (strain ATCC MYA-4892 / CBS 513.88 / FGSC A1513).